The primary structure comprises 468 residues: UDP-N-acetylmuramate--L-alanine ligase (468 aa).

114-120 (GTHGKTT) serves as a coordination point for ATP.

This sequence belongs to the MurCDEF family.

Its subcellular location is the cytoplasm. It carries out the reaction UDP-N-acetyl-alpha-D-muramate + L-alanine + ATP = UDP-N-acetyl-alpha-D-muramoyl-L-alanine + ADP + phosphate + H(+). Its pathway is cell wall biogenesis; peptidoglycan biosynthesis. Its function is as follows. Cell wall formation. The sequence is that of UDP-N-acetylmuramate--L-alanine ligase from Methylobacterium radiotolerans (strain ATCC 27329 / DSM 1819 / JCM 2831 / NBRC 15690 / NCIMB 10815 / 0-1).